Reading from the N-terminus, the 391-residue chain is 1-deoxy-D-xylulose 5-phosphate reductoisomerase (391 aa).

Positions 17, 18, 19, 20, 47, and 130 each coordinate NADPH. Lysine 131 serves as a coordination point for 1-deoxy-D-xylulose 5-phosphate. Glutamate 132 contributes to the NADPH binding site. A Mn(2+)-binding site is contributed by aspartate 156. Residues serine 157, glutamate 158, serine 182, and histidine 205 each coordinate 1-deoxy-D-xylulose 5-phosphate. Glutamate 158 contributes to the Mn(2+) binding site. Glycine 211 lines the NADPH pocket. 1-deoxy-D-xylulose 5-phosphate is bound by residues serine 218, asparagine 223, lysine 224, and glutamate 227. Residue glutamate 227 coordinates Mn(2+).

It belongs to the DXR family. Mg(2+) serves as cofactor. Requires Mn(2+) as cofactor.

It catalyses the reaction 2-C-methyl-D-erythritol 4-phosphate + NADP(+) = 1-deoxy-D-xylulose 5-phosphate + NADPH + H(+). The protein operates within isoprenoid biosynthesis; isopentenyl diphosphate biosynthesis via DXP pathway; isopentenyl diphosphate from 1-deoxy-D-xylulose 5-phosphate: step 1/6. Its function is as follows. Catalyzes the NADPH-dependent rearrangement and reduction of 1-deoxy-D-xylulose-5-phosphate (DXP) to 2-C-methyl-D-erythritol 4-phosphate (MEP). This is 1-deoxy-D-xylulose 5-phosphate reductoisomerase from Sinorhizobium fredii (strain NBRC 101917 / NGR234).